A 582-amino-acid polypeptide reads, in one-letter code: Probable DNA ligase (582 aa).

Residue E243 coordinates ATP. K245 serves as the catalytic N6-AMP-lysine intermediate. The ATP site is built by R250, R265, E295, F335, R410, and K416.

The protein belongs to the ATP-dependent DNA ligase family. Requires Mg(2+) as cofactor.

It catalyses the reaction ATP + (deoxyribonucleotide)n-3'-hydroxyl + 5'-phospho-(deoxyribonucleotide)m = (deoxyribonucleotide)n+m + AMP + diphosphate.. Its function is as follows. DNA ligase that seals nicks in double-stranded DNA during DNA replication, DNA recombination and DNA repair. This chain is Probable DNA ligase, found in Dictyoglomus turgidum (strain DSM 6724 / Z-1310).